The following is a 349-amino-acid chain: Isopentenyl-diphosphate delta-isomerase (349 aa).

6-7 contacts substrate; it reads RK. FMN is bound by residues 62-64, Ser-93, and Asn-122; that span reads AMT. Gln-152 lines the substrate pocket. Glu-153 lines the Mg(2+) pocket. FMN contacts are provided by residues Lys-184, Thr-214, 258 to 259, and 280 to 281; these read GG and AG.

The protein belongs to the IPP isomerase type 2 family. Homooctamer. Dimer of tetramers. FMN serves as cofactor. It depends on NADPH as a cofactor. The cofactor is Mg(2+).

The protein resides in the cytoplasm. The enzyme catalyses isopentenyl diphosphate = dimethylallyl diphosphate. Involved in the biosynthesis of isoprenoids. Catalyzes the 1,3-allylic rearrangement of the homoallylic substrate isopentenyl (IPP) to its allylic isomer, dimethylallyl diphosphate (DMAPP). The polypeptide is Isopentenyl-diphosphate delta-isomerase (Bacillus cereus (strain ATCC 10987 / NRS 248)).